A 147-amino-acid polypeptide reads, in one-letter code: UPF0306 protein YhbP (147 aa).

This sequence belongs to the UPF0306 family.

This chain is UPF0306 protein YhbP, found in Salmonella agona (strain SL483).